Reading from the N-terminus, the 170-residue chain is RNA pyrophosphohydrolase (170 aa).

Residues 6–149 (GFRPNVGIVI…KRDVYRRALK (144 aa)) enclose the Nudix hydrolase domain. Positions 38–59 (GGIDDGETPEQAMYRELYEEVG) match the Nudix box motif.

It belongs to the Nudix hydrolase family. RppH subfamily. It depends on a divalent metal cation as a cofactor.

Its function is as follows. Accelerates the degradation of transcripts by removing pyrophosphate from the 5'-end of triphosphorylated RNA, leading to a more labile monophosphorylated state that can stimulate subsequent ribonuclease cleavage. The sequence is that of RNA pyrophosphohydrolase from Aliivibrio fischeri (strain ATCC 700601 / ES114) (Vibrio fischeri).